The primary structure comprises 118 residues: Putative pterin-4-alpha-carbinolamine dehydratase (118 aa).

The protein belongs to the pterin-4-alpha-carbinolamine dehydratase family.

The catalysed reaction is (4aS,6R)-4a-hydroxy-L-erythro-5,6,7,8-tetrahydrobiopterin = (6R)-L-erythro-6,7-dihydrobiopterin + H2O. This chain is Putative pterin-4-alpha-carbinolamine dehydratase, found in Xanthomonas campestris pv. campestris (strain B100).